Here is a 698-residue protein sequence, read N- to C-terminus: UvrABC system protein B (698 aa).

One can recognise a Helicase ATP-binding domain in the interval 28 to 414 (RRILAGERDV…SGGEFVEQVI (387 aa)). 41–48 (GATGTGKS) serves as a coordination point for ATP. A Beta-hairpin motif is present at residues 94–117 (YYDYYQPEAYIAQTDTYIEKDSSI). Residues 432–598 (QIDDLIGEIR…PLRKKIADIL (167 aa)) form the Helicase C-terminal domain. The tract at residues 609 to 629 (DTVQVGGSGRNVSRGRRAQSE) is disordered. Positions 653-688 (ADLIKDLTAQMMAAASDLQFELAARFRDEIADLKKE) constitute a UVR domain.

It belongs to the UvrB family. In terms of assembly, forms a heterotetramer with UvrA during the search for lesions. Interacts with UvrC in an incision complex.

The protein resides in the cytoplasm. Functionally, the UvrABC repair system catalyzes the recognition and processing of DNA lesions. A damage recognition complex composed of 2 UvrA and 2 UvrB subunits scans DNA for abnormalities. Upon binding of the UvrA(2)B(2) complex to a putative damaged site, the DNA wraps around one UvrB monomer. DNA wrap is dependent on ATP binding by UvrB and probably causes local melting of the DNA helix, facilitating insertion of UvrB beta-hairpin between the DNA strands. Then UvrB probes one DNA strand for the presence of a lesion. If a lesion is found the UvrA subunits dissociate and the UvrB-DNA preincision complex is formed. This complex is subsequently bound by UvrC and the second UvrB is released. If no lesion is found, the DNA wraps around the other UvrB subunit that will check the other stand for damage. This chain is UvrABC system protein B, found in Mycobacterium leprae (strain TN).